Reading from the N-terminus, the 229-residue chain is Predicted GPI-anchored protein 19 (229 aa).

The first 20 residues, Met1–Pro20, serve as a signal peptide directing secretion. Residues Asp63–Ala92 form a disordered region. Polar residues predominate over residues Gly81–Ala92. N-linked (GlcNAc...) asparagine glycosylation is found at Asn87, Asn184, and Asn189. A lipid anchor (GPI-anchor amidated glycine) is attached at Gly208. The propeptide at Phe209 to Phe229 is removed in mature form.

The protein localises to the cell membrane. Its function is as follows. Predicted GPI-anchored protein which may have a role during host infection. This chain is Predicted GPI-anchored protein 19 (PGA19), found in Candida albicans (strain SC5314 / ATCC MYA-2876) (Yeast).